Consider the following 958-residue polypeptide: DNA repair and recombination protein RDH54 (958 aa).

The segment at 189–217 (EALSQNMGNPSPPTTSTTETVPSTKNDGG) is disordered. Residues 202-212 (TTSTTETVPST) show a composition bias toward low complexity. One can recognise a Helicase ATP-binding domain in the interval 333–521 (LENDSDISGC…FTIIDFINPG (189 aa)). Position 380–387 (380–387 (IPLTGLCK)) interacts with ATP. The DEGH box signature appears at 506–509 (NDLN). A Glycyl lysine isopeptide (Lys-Gly) (interchain with G-Cter in ubiquitin) cross-link involves residue Lys-649. In terms of domain architecture, Helicase C-terminal spans 665–824 (KLKVLMTLLE…DSEMRNKESS (160 aa)).

It belongs to the SNF2/RAD54 helicase family. Interacts with RAD51 and DMC1.

Its subcellular location is the nucleus. The enzyme catalyses ATP + H2O = ADP + phosphate + H(+). Functionally, involved in the recombinational repair of double-strand breaks (DSB) in DNA during mitosis and meiosis. Has DNA dependent ATPase activity. Promotes D-loop (displacement loop) formation with RAD51 recombinase. Modifies the topology of double-stranded DNA during the D-loop reaction to facilitate the invasion of the homologous duplex molecule by the initiating single-stranded DNA substrate. Required for adaptation from G2/M checkpoint arrest induced by a double strand break, by participating in monitoring the extent of single-stranded DNA produced by resection of DNA ends. This role is distinct from its roles in recombination. Promotes colocalization of RAD51 and DMC1 during meiotic recombination. Involved in crossover interference. In Saccharomyces cerevisiae (strain ATCC 204508 / S288c) (Baker's yeast), this protein is DNA repair and recombination protein RDH54 (RDH54).